Reading from the N-terminus, the 520-residue chain is Succinyl-CoA:3-ketoacid coenzyme A transferase 2A, mitochondrial (520 aa).

Residues 1 to 39 (MAALRLLAWAFSRRVSAHRPQPTLPHHLIRHYPTTRCGK) constitute a mitochondrion transit peptide. The disordered stretch occupies residues 280–299 (ERLTTRDSPPAPGSKDQDPK). Glutamate 342 (5-glutamyl coenzyme A thioester intermediate) is an active-site residue.

This sequence belongs to the 3-oxoacid CoA-transferase family. Homodimer. As to expression, expressed in flagella of epididymal sperm.

Its subcellular location is the mitochondrion. The catalysed reaction is a 3-oxo acid + succinyl-CoA = a 3-oxoacyl-CoA + succinate. Its pathway is ketone metabolism; succinyl-CoA degradation; acetoacetyl-CoA from succinyl-CoA: step 1/1. In terms of biological role, key enzyme for ketone body catabolism. Transfers the CoA moiety from succinate to acetoacetate. Formation of the enzyme-CoA intermediate proceeds via an unstable anhydride species formed between the carboxylate groups of the enzyme and substrate. Probably play and important roles in the energy metabolism of spermatozoa. The chain is Succinyl-CoA:3-ketoacid coenzyme A transferase 2A, mitochondrial (Oxct2a) from Rattus norvegicus (Rat).